The primary structure comprises 529 residues: uncharacterized protein (529 aa).

A signal peptide spans 1-20 (MYFLILILVLLLIMVAAATA).

This is an uncharacterized protein from Orgyia pseudotsugata multicapsid polyhedrosis virus (OpMNPV).